A 223-amino-acid chain; its full sequence is Thiamine-phosphate synthase (223 aa).

4-amino-2-methyl-5-(diphosphooxymethyl)pyrimidine is bound by residues 42-46 and N83; that span reads QLRDK. D84 and D103 together coordinate Mg(2+). Residue S122 coordinates 4-amino-2-methyl-5-(diphosphooxymethyl)pyrimidine. Residue 148-150 participates in 2-[(2R,5Z)-2-carboxy-4-methylthiazol-5(2H)-ylidene]ethyl phosphate binding; it reads TPT. K151 contacts 4-amino-2-methyl-5-(diphosphooxymethyl)pyrimidine. A 2-[(2R,5Z)-2-carboxy-4-methylthiazol-5(2H)-ylidene]ethyl phosphate-binding site is contributed by G179.

This sequence belongs to the thiamine-phosphate synthase family. It depends on Mg(2+) as a cofactor.

It carries out the reaction 2-[(2R,5Z)-2-carboxy-4-methylthiazol-5(2H)-ylidene]ethyl phosphate + 4-amino-2-methyl-5-(diphosphooxymethyl)pyrimidine + 2 H(+) = thiamine phosphate + CO2 + diphosphate. It catalyses the reaction 2-(2-carboxy-4-methylthiazol-5-yl)ethyl phosphate + 4-amino-2-methyl-5-(diphosphooxymethyl)pyrimidine + 2 H(+) = thiamine phosphate + CO2 + diphosphate. The enzyme catalyses 4-methyl-5-(2-phosphooxyethyl)-thiazole + 4-amino-2-methyl-5-(diphosphooxymethyl)pyrimidine + H(+) = thiamine phosphate + diphosphate. It functions in the pathway cofactor biosynthesis; thiamine diphosphate biosynthesis; thiamine phosphate from 4-amino-2-methyl-5-diphosphomethylpyrimidine and 4-methyl-5-(2-phosphoethyl)-thiazole: step 1/1. Functionally, condenses 4-methyl-5-(beta-hydroxyethyl)thiazole monophosphate (THZ-P) and 2-methyl-4-amino-5-hydroxymethyl pyrimidine pyrophosphate (HMP-PP) to form thiamine monophosphate (TMP). The sequence is that of Thiamine-phosphate synthase from Mycobacterium avium (strain 104).